The primary structure comprises 106 residues: Large ribosomal subunit protein uL24 (106 aa).

It belongs to the universal ribosomal protein uL24 family. In terms of assembly, part of the 50S ribosomal subunit.

Functionally, one of two assembly initiator proteins, it binds directly to the 5'-end of the 23S rRNA, where it nucleates assembly of the 50S subunit. Its function is as follows. One of the proteins that surrounds the polypeptide exit tunnel on the outside of the subunit. The chain is Large ribosomal subunit protein uL24 from Gluconobacter oxydans (strain 621H) (Gluconobacter suboxydans).